The sequence spans 288 residues: Acetyl-coenzyme A carboxylase carboxyl transferase subunit beta (288 aa).

A CoA carboxyltransferase N-terminal domain is found at Leu-32–Val-288. Zn(2+) is bound by residues Cys-36, Cys-39, Cys-54, and Cys-57. The C4-type zinc-finger motif lies at Cys-36–Cys-57.

Belongs to the AccD/PCCB family. Acetyl-CoA carboxylase is a heterohexamer composed of biotin carboxyl carrier protein (AccB), biotin carboxylase (AccC) and two subunits each of ACCase subunit alpha (AccA) and ACCase subunit beta (AccD). Requires Zn(2+) as cofactor.

Its subcellular location is the cytoplasm. The catalysed reaction is N(6)-carboxybiotinyl-L-lysyl-[protein] + acetyl-CoA = N(6)-biotinyl-L-lysyl-[protein] + malonyl-CoA. The protein operates within lipid metabolism; malonyl-CoA biosynthesis; malonyl-CoA from acetyl-CoA: step 1/1. Its function is as follows. Component of the acetyl coenzyme A carboxylase (ACC) complex. Biotin carboxylase (BC) catalyzes the carboxylation of biotin on its carrier protein (BCCP) and then the CO(2) group is transferred by the transcarboxylase to acetyl-CoA to form malonyl-CoA. The polypeptide is Acetyl-coenzyme A carboxylase carboxyl transferase subunit beta (Lactococcus lactis subsp. lactis (strain IL1403) (Streptococcus lactis)).